A 286-amino-acid chain; its full sequence is 2-dehydro-3-deoxyphosphooctonate aldolase (286 aa).

It belongs to the KdsA family.

The protein localises to the cytoplasm. It carries out the reaction D-arabinose 5-phosphate + phosphoenolpyruvate + H2O = 3-deoxy-alpha-D-manno-2-octulosonate-8-phosphate + phosphate. Its pathway is carbohydrate biosynthesis; 3-deoxy-D-manno-octulosonate biosynthesis; 3-deoxy-D-manno-octulosonate from D-ribulose 5-phosphate: step 2/3. The protein operates within bacterial outer membrane biogenesis; lipopolysaccharide biosynthesis. This is 2-dehydro-3-deoxyphosphooctonate aldolase from Shewanella denitrificans (strain OS217 / ATCC BAA-1090 / DSM 15013).